The chain runs to 408 residues: Phosphopentomutase (408 aa).

The Mn(2+) site is built by Asp-10, Asp-307, His-312, Asp-348, His-349, and His-360.

The protein belongs to the phosphopentomutase family. It depends on Mn(2+) as a cofactor.

It is found in the cytoplasm. It catalyses the reaction 2-deoxy-alpha-D-ribose 1-phosphate = 2-deoxy-D-ribose 5-phosphate. The catalysed reaction is alpha-D-ribose 1-phosphate = D-ribose 5-phosphate. It participates in carbohydrate degradation; 2-deoxy-D-ribose 1-phosphate degradation; D-glyceraldehyde 3-phosphate and acetaldehyde from 2-deoxy-alpha-D-ribose 1-phosphate: step 1/2. Its function is as follows. Isomerase that catalyzes the conversion of deoxy-ribose 1-phosphate (dRib-1-P) and ribose 1-phosphate (Rib-1-P) to deoxy-ribose 5-phosphate (dRib-5-P) and ribose 5-phosphate (Rib-5-P), respectively. The polypeptide is Phosphopentomutase (Proteus mirabilis (strain HI4320)).